The following is a 156-amino-acid chain: Small ribosomal subunit protein uS7 (156 aa).

Belongs to the universal ribosomal protein uS7 family. As to quaternary structure, part of the 30S ribosomal subunit. Contacts proteins S9 and S11.

One of the primary rRNA binding proteins, it binds directly to 16S rRNA where it nucleates assembly of the head domain of the 30S subunit. Is located at the subunit interface close to the decoding center, probably blocks exit of the E-site tRNA. This is Small ribosomal subunit protein uS7 from Citrobacter koseri (strain ATCC BAA-895 / CDC 4225-83 / SGSC4696).